Here is a 318-residue protein sequence, read N- to C-terminus: Pheromone-regulated membrane protein 5 (318 aa).

A helical transmembrane segment spans residues 78-98; sequence FIXVGGIAGVIFLAILLWWVI. S129 bears the Phosphoserine mark. The segment covering 238-247 has biased composition (low complexity); sequence TISSSSASSL. A disordered region spans residues 238 to 318; the sequence is TISSSSASSL…HMLEGKEQDE (81 aa). The span at 250–261 shows a compositional bias: basic and acidic residues; the sequence is GNEKEVGEDIRK. The segment covering 276–285 has biased composition (polar residues); sequence SPESDGSVNR. 3 positions are modified to phosphoserine: S279, S282, and S288. A compositionally biased stretch (basic and acidic residues) spans 309-318; the sequence is HMLEGKEQDE. A Glycyl lysine isopeptide (Lys-Gly) (interchain with G-Cter in ubiquitin) cross-link involves residue K314.

Belongs to the PRM5 family.

The protein localises to the membrane. This Saccharomyces cerevisiae (strain FostersO) (Baker's yeast) protein is Pheromone-regulated membrane protein 5 (PRM5).